The primary structure comprises 136 residues: Histone H3.3C (136 aa).

Over residues 1–10 the composition is skewed to polar residues; it reads MARTKQTACK. The interval 1-39 is disordered; the sequence is MARTKQTACKSTGRKAPRKQLATKAAHKSAPAMGGVKKP. At Arg3 the chain carries Asymmetric dimethylarginine; by PRMT6. Phosphothreonine; by HASPIN is present on Thr4. Lys5 is subject to Allysine; alternate. At Lys5 the chain carries N6,N6,N6-trimethyllysine; alternate. Residue Lys5 is modified to N6,N6-dimethyllysine; alternate. Residue Lys5 is modified to N6-(2-hydroxyisobutyryl)lysine; alternate. Residue Lys5 is modified to N6-acetyllysine; alternate. At Lys5 the chain carries N6-methyllysine; alternate. Gln6 is modified (5-glutamyl dopamine; alternate). The residue at position 6 (Gln6) is a 5-glutamyl serotonin; alternate. Thr7 bears the Phosphothreonine; by PKC mark. An N6-(2-hydroxyisobutyryl)lysine; alternate modification is found at Lys10. Lys10 carries the N6-lactoyllysine; alternate modification. Lys10 bears the N6-methylated lysine mark. Residue Ser11 is modified to ADP-ribosylserine; alternate. The residue at position 11 (Ser11) is a Phosphoserine; alternate; by AURKB, AURKC, RPS6KA3, RPS6KA4 and RPS6KA5. Thr12 carries the phosphothreonine; by PKC modification. Lys15 carries the N6-(2-hydroxyisobutyryl)lysine; alternate modification. N6-lactoyllysine; alternate is present on Lys15. Lys15 carries the N6-acetyllysine modification. Position 15 is an N6-glutaryllysine; alternate (Lys15). Arg18 bears the Asymmetric dimethylarginine mark. Lys19, Lys24, and Lys28 each carry N6-(2-hydroxyisobutyryl)lysine; alternate. Position 19 is an N6-acetyllysine; alternate (Lys19). Residues Lys19, Lys24, and Lys28 each carry the N6-lactoyllysine; alternate modification. Lys19, Lys24, and Lys28 each carry N6-glutaryllysine; alternate. N6-butyryllysine; alternate occurs at positions 19 and 24. Lys19 is modified (N6-methylated lysine; alternate). Lys24 carries the post-translational modification N6-acetyllysine. Lys28 carries the N6-acetyllysine; alternate modification. Lys28 bears the N6-methylated lysine; alternate mark. Ser29 bears the ADP-ribosylserine; alternate mark. Residue Ser29 is modified to Phosphoserine; alternate; by AURKB, AURKC and RPS6KA5. Lys37 is modified (N6-(2-hydroxyisobutyryl)lysine; alternate). An N6-acetyllysine; alternate modification is found at Lys37. Position 37 is an N6-methylated lysine; alternate (Lys37). The residue at position 42 (Tyr42) is a Phosphotyrosine. Residue Lys57 is modified to N6-(2-hydroxyisobutyryl)lysine; alternate. Lys57 is modified (N6-lactoyllysine; alternate). N6-glutaryllysine; alternate is present on Lys57. N6-succinyllysine; alternate is present on Lys57. The residue at position 58 (Ser58) is a Phosphoserine. N6-(2-hydroxyisobutyryl)lysine; alternate occurs at positions 65 and 80. Lys65 and Lys80 each carry N6-methylated lysine. Lys80 bears the N6-lactoyllysine; alternate mark. Lys80 is modified (N6-glutaryllysine; alternate). Position 80 is an N6-succinyllysine; alternate (Lys80). Residue Thr81 is modified to Phosphothreonine. N6-acetyllysine; alternate is present on residues Lys116 and Lys123. An N6-glutaryllysine; alternate mark is found at Lys116 and Lys123. The residue at position 123 (Lys123) is an N6-(2-hydroxyisobutyryl)lysine; alternate. The residue at position 123 (Lys123) is an N6-methylated lysine; alternate. Residue Lys123 is modified to N6-succinyllysine; alternate.

This sequence belongs to the histone H3 family. As to quaternary structure, the nucleosome is a histone octamer containing two molecules each of H2A, H2B, H3 and H4 assembled in one H3-H4 heterotetramer and two H2A-H2B heterodimers. The octamer wraps approximately 147 bp of DNA. Post-translationally, acetylation is generally linked to gene activation. Acetylation on Lys-19 (H3K18ac) and Lys-24 (H3K24ac) favors methylation at Arg-18 (H3R17me). Acetylation at Lys-123 (H3K122ac) by EP300/p300 plays a central role in chromatin structure: localizes at the surface of the histone octamer and stimulates transcription, possibly by promoting nucleosome instability. Asymmetric dimethylation at Arg-18 (H3R17me2a) is linked to gene activation. Asymmetric dimethylation at Arg-3 (H3R2me2a) by PRMT6 is linked to gene repression and is mutually exclusive with H3 Lys-5 methylation (H3K4me2 and H3K4me3). H3R2me2a is present at the 3' of genes regardless of their transcription state and is enriched on inactive promoters, while it is absent on active promoters. In terms of processing, methylation at Lys-5 (H3K4me) and Lys-80 (H3K79me) are linked to gene activation. Methylation at Lys-5 (H3K4me) facilitates subsequent acetylation of H3 and H4. Methylation at Lys-80 (H3K79me) is associated with DNA double-strand break (DSB) responses and is a specific target for TP53BP1. Methylation at Lys-10 (H3K9me) and Lys-28 (H3K27me) are linked to gene repression. Methylation at Lys-10 (H3K9me) is a specific target for HP1 proteins (CBX1, CBX3 and CBX5) and prevents subsequent phosphorylation at Ser-11 (H3S10ph) and acetylation of H3 and H4. Methylation at Lys-5 (H3K4me) and Lys-80 (H3K79me) require preliminary monoubiquitination of H2B at 'Lys-120'. Post-translationally, phosphorylated at Thr-4 (H3T3ph) by HASPIN during prophase and dephosphorylated during anaphase. Phosphorylation at Ser-11 (H3S10ph) by AURKB is crucial for chromosome condensation and cell-cycle progression during mitosis and meiosis. In addition phosphorylation at Ser-11 (H3S10ph) by RPS6KA4 and RPS6KA5 is important during interphase because it enables the transcription of genes following external stimulation, like mitogens, stress, growth factors or UV irradiation and result in the activation of genes, such as c-fos and c-jun. Phosphorylation at Ser-11 (H3S10ph), which is linked to gene activation, prevents methylation at Lys-10 (H3K9me) but facilitates acetylation of H3 and H4. Phosphorylation at Ser-11 (H3S10ph) by AURKB mediates the dissociation of HP1 proteins (CBX1, CBX3 and CBX5) from heterochromatin. Phosphorylation at Ser-11 (H3S10ph) is also an essential regulatory mechanism for neoplastic cell transformation. Phosphorylated at Ser-29 (H3S28ph) by MAP3K20 isoform 1, RPS6KA5 or AURKB during mitosis or upon ultraviolet B irradiation. Phosphorylation at Thr-7 (H3T6ph) by PRKCB is a specific tag for epigenetic transcriptional activation that prevents demethylation of Lys-5 (H3K4me) by LSD1/KDM1A. At centromeres, specifically phosphorylated at Thr-12 (H3T11ph) from prophase to early anaphase, by DAPK3 and PKN1. Phosphorylation at Thr-12 (H3T11ph) by PKN1 or isoform M2 of PKM (PKM2) is a specific tag for epigenetic transcriptional activation that promotes demethylation of Lys-10 (H3K9me) by KDM4C/JMJD2C. Phosphorylation at Tyr-42 (H3Y41ph) by JAK2 promotes exclusion of CBX5 (HP1 alpha) from chromatin. Lysine deamination at Lys-5 (H3K4all) to form allysine only takes place on H3K4me3 and results in gene repression. In terms of processing, butyrylation of histones marks active promoters and competes with histone acetylation. It is present during late spermatogenesis. Post-translationally, succinylation at Lys-80 (H3K79succ) by KAT2A takes place with a maximum frequency around the transcription start sites of genes. It gives a specific tag for epigenetic transcription activation. Desuccinylation at Lys-123 (H3K122succ) by SIRT7 in response to DNA damage promotes chromatin condensation and double-strand breaks (DSBs) repair. Serine ADP-ribosylation constitutes the primary form of ADP-ribosylation of proteins in response to DNA damage. Serine ADP-ribosylation at Ser-11 (H3S10ADPr) is mutually exclusive with phosphorylation at Ser-11 (H3S10ph) and impairs acetylation at Lys-10 (H3K9ac).

It is found in the nucleus. Its subcellular location is the chromosome. Functionally, core component of nucleosome. Nucleosomes wrap and compact DNA into chromatin, limiting DNA accessibility to the cellular machineries which require DNA as a template. Histones thereby play a central role in transcription regulation, DNA repair, DNA replication and chromosomal stability. DNA accessibility is regulated via a complex set of post-translational modifications of histones, also called histone code, and nucleosome remodeling. The polypeptide is Histone H3.3C (Cairina moschata (Muscovy duck)).